The following is a 1133-amino-acid chain: ATP-dependent DNA helicase homolog MER3 (1133 aa).

The Helicase ATP-binding domain occupies 34 to 229 (PLCFHSDINM…WLKVPTAGIK (196 aa)). 47-54 (APTGSGKT) lines the ATP pocket. Residues 165-168 (DEVH) carry the DEVH box motif. Residues 263–460 (YIYDILMQYS…CLIEHLTAEI (198 aa)) form the Helicase C-terminal domain. In terms of domain architecture, SEC63 spans 536 to 847 (EPGRLMTKYY…FEEYIGIDLH (312 aa)). The tract at residues 878–919 (ACIADDDNPVTSGPSNRKDKKDDMPSFKLIDDDSEEEKEPYV) is disordered. Basic and acidic residues predominate over residues 893 to 908 (NRKDKKDDMPSFKLID). A compositionally biased stretch (acidic residues) spans 909-919 (DDSEEEKEPYV).

This sequence belongs to the helicase family. SKI2 subfamily. Expressed in meiocytes during meiosis.

Its subcellular location is the nucleus. It catalyses the reaction Couples ATP hydrolysis with the unwinding of duplex DNA by translocating in the 3'-5' direction.. It carries out the reaction ATP + H2O = ADP + phosphate + H(+). In terms of biological role, DNA helicase required for crossover formation, complete synapsis of homologous chromosomes and bivalent formation during meiosis. Is specific to recombination events resulting in interference-sensitive crossovers (class I meiotic crossover). The polypeptide is ATP-dependent DNA helicase homolog MER3 (Arabidopsis thaliana (Mouse-ear cress)).